A 162-amino-acid chain; its full sequence is NADH-quinone oxidoreductase subunit I 2 (162 aa).

4Fe-4S ferredoxin-type domains are found at residues 53 to 83 (LRRY…IDSE) and 93 to 122 (TRYD…ETRI). Cys63, Cys66, Cys69, Cys73, Cys102, Cys105, Cys108, and Cys112 together coordinate [4Fe-4S] cluster.

This sequence belongs to the complex I 23 kDa subunit family. In terms of assembly, NDH-1 is composed of 14 different subunits. Subunits NuoA, H, J, K, L, M, N constitute the membrane sector of the complex. It depends on [4Fe-4S] cluster as a cofactor.

The protein localises to the cell inner membrane. The enzyme catalyses a quinone + NADH + 5 H(+)(in) = a quinol + NAD(+) + 4 H(+)(out). Functionally, NDH-1 shuttles electrons from NADH, via FMN and iron-sulfur (Fe-S) centers, to quinones in the respiratory chain. The immediate electron acceptor for the enzyme in this species is believed to be ubiquinone. Couples the redox reaction to proton translocation (for every two electrons transferred, four hydrogen ions are translocated across the cytoplasmic membrane), and thus conserves the redox energy in a proton gradient. In Nitrosococcus oceani (strain ATCC 19707 / BCRC 17464 / JCM 30415 / NCIMB 11848 / C-107), this protein is NADH-quinone oxidoreductase subunit I 2.